We begin with the raw amino-acid sequence, 855 residues long: Discoidin domain-containing receptor 2 (855 aa).

Positions 1–21 (MILIPRMLLVLFLLLPILSSA) are cleaved as a signal peptide. The Extracellular segment spans residues 22-399 (KAQVNPAICR…MLKVDDSNTR (378 aa)). An F5/8 type C domain is found at 30 to 185 (CRYPLGMSGG…VCMRVELYGC (156 aa)). 2 disulfide bridges follow: Cys30–Cys185 and Cys73–Cys177. N-linked (GlcNAc...) asparagine glycans are attached at residues Asn121, Asn213, Asn261, Asn280, and Asn372. Residues 400–421 (ILIGCLVAIIFILLAIIVIILW) traverse the membrane as a helical segment. At 422 to 855 (RQFWQKMLEK…HLLLLQQGDE (434 aa)) the chain is on the cytoplasmic side. Residues 452–471 (SMFNNNRSSSPSEQGSNSTY) are disordered. Phosphotyrosine; by SRC and autocatalysis is present on Tyr471. Residues 563 to 849 (LTFKEKLGEG…PSFQEIHLLL (287 aa)) enclose the Protein kinase domain. ATP is bound by residues 569 to 577 (LGEGQFGEV) and Lys608. Asp710 acts as the Proton acceptor in catalysis. 3 positions are modified to phosphotyrosine; by SRC and autocatalysis: Tyr736, Tyr740, and Tyr741.

This sequence belongs to the protein kinase superfamily. Tyr protein kinase family. Insulin receptor subfamily. In terms of assembly, binds hydroxyproline-rich sequence motifs in fibrillar, glycosylated collagen, such as the GQOGVMGFO motif, where O stands for hydroxyproline. Interacts with SRC. Interacts (tyrosine phosphorylated) with SHC1. Post-translationally, N-glycosylated. Tyrosine phosphorylated in response to collagen binding. Phosphorylated by SRC; this is required for activation and subsequent autophosphorylation on additional tyrosine residues. Detected in osteocytes, osteoblastic cells in subchondral bone, bone lining cells, tibia and cartilage (at protein level). Detected at high levels in heart and lung, and at low levels in brain, placenta, liver, skeletal muscle, pancreas, and kidney.

Its subcellular location is the cell membrane. It catalyses the reaction L-tyrosyl-[protein] + ATP = O-phospho-L-tyrosyl-[protein] + ADP + H(+). Present in an inactive state in the absence of collagen binding and phosphorylation by SRC. Tyrosine phosphorylation enhances the affinity for ATP and the catalytic activity. In terms of biological role, tyrosine kinase involved in the regulation of tissues remodeling. It functions as a cell surface receptor for fibrillar collagen and regulates cell differentiation, remodeling of the extracellular matrix, cell migration and cell proliferation. Required for normal bone development. Regulates osteoblast differentiation and chondrocyte maturation via a signaling pathway that involves MAP kinases and leads to the activation of the transcription factor RUNX2. Regulates remodeling of the extracellular matrix by up-regulation of the collagenases MMP1, MMP2 and MMP13, and thereby facilitates cell migration and tumor cell invasion. Promotes fibroblast migration and proliferation, and thereby contributes to cutaneous wound healing. The polypeptide is Discoidin domain-containing receptor 2 (DDR2) (Homo sapiens (Human)).